The following is a 382-amino-acid chain: Intermediate transcription factor 3 large subunit (382 aa).

This sequence belongs to the poxviruses A23 family. Heterodimer of a 45 kDa and a 32 kDa subunit.

Functionally, acts with RNA polymerase to initiate transcription from intermediate gene promoters. The chain is Intermediate transcription factor 3 large subunit (VITF3L) from Camelus.